Here is a 233-residue protein sequence, read N- to C-terminus: Ribonuclease 3 (233 aa).

One can recognise an RNase III domain in the interval 5–127; that stretch reads LERLCRKLGY…VIGAVYLDGG (123 aa). Glutamate 40 serves as a coordination point for Mg(2+). Residue aspartate 44 is part of the active site. Mg(2+) contacts are provided by aspartate 113 and glutamate 116. The active site involves glutamate 116. Residues 156–226 form the DRBM domain; that stretch reads DPKTRLQEYL…ATRALALLLA (71 aa).

The protein belongs to the ribonuclease III family. As to quaternary structure, homodimer. Mg(2+) serves as cofactor.

The protein localises to the cytoplasm. It catalyses the reaction Endonucleolytic cleavage to 5'-phosphomonoester.. Digests double-stranded RNA. Involved in the processing of primary rRNA transcript to yield the immediate precursors to the large and small rRNAs (23S and 16S). Processes some mRNAs, and tRNAs when they are encoded in the rRNA operon. Processes pre-crRNA and tracrRNA of type II CRISPR loci if present in the organism. The sequence is that of Ribonuclease 3 from Nitrosococcus oceani (strain ATCC 19707 / BCRC 17464 / JCM 30415 / NCIMB 11848 / C-107).